A 728-amino-acid chain; its full sequence is Polyphosphate kinase (728 aa).

ATP is bound at residue Asn57. Mg(2+) contacts are provided by Arg408 and Arg438. The Phosphohistidine intermediate role is filled by His468. Residues Tyr501, Arg597, and His625 each coordinate ATP. Residues 694 to 728 (VQRRPASPEQSQSSQAIFTAQAIAETTEDPELRSV) form a disordered region. The span at 695-709 (QRRPASPEQSQSSQA) shows a compositional bias: low complexity.

This sequence belongs to the polyphosphate kinase 1 (PPK1) family. It depends on Mg(2+) as a cofactor. In terms of processing, an intermediate of this reaction is the autophosphorylated ppk in which a phosphate is covalently linked to a histidine residue through a N-P bond.

The catalysed reaction is [phosphate](n) + ATP = [phosphate](n+1) + ADP. Its function is as follows. Catalyzes the reversible transfer of the terminal phosphate of ATP to form a long-chain polyphosphate (polyP). This is Polyphosphate kinase from Synechocystis sp. (strain ATCC 27184 / PCC 6803 / Kazusa).